A 308-amino-acid polypeptide reads, in one-letter code: tRNA pseudouridine synthase B (308 aa).

The active-site Nucleophile is Asp-44.

Belongs to the pseudouridine synthase TruB family. Type 1 subfamily.

It carries out the reaction uridine(55) in tRNA = pseudouridine(55) in tRNA. Responsible for synthesis of pseudouridine from uracil-55 in the psi GC loop of transfer RNAs. The polypeptide is tRNA pseudouridine synthase B (Nitratidesulfovibrio vulgaris (strain DSM 19637 / Miyazaki F) (Desulfovibrio vulgaris)).